A 243-amino-acid chain; its full sequence is 23S rRNA (guanosine-2'-O-)-methyltransferase RlmB (243 aa).

Residues Gly-196, Ile-216, and Leu-225 each contribute to the S-adenosyl-L-methionine site.

This sequence belongs to the class IV-like SAM-binding methyltransferase superfamily. RNA methyltransferase TrmH family. RlmB subfamily. Homodimer.

Its subcellular location is the cytoplasm. It catalyses the reaction guanosine(2251) in 23S rRNA + S-adenosyl-L-methionine = 2'-O-methylguanosine(2251) in 23S rRNA + S-adenosyl-L-homocysteine + H(+). Specifically methylates the ribose of guanosine 2251 in 23S rRNA. This chain is 23S rRNA (guanosine-2'-O-)-methyltransferase RlmB, found in Shigella flexneri.